The following is a 505-amino-acid chain: Glutamate--tRNA ligase (505 aa).

The short motif at 12–22 (PSPTGALHIGG) is the 'HIGH' region element. The 'KMSKS' region motif lies at 260–264 (KLSKR). Lys-263 contributes to the ATP binding site.

Belongs to the class-I aminoacyl-tRNA synthetase family. Glutamate--tRNA ligase type 1 subfamily. Monomer.

It localises to the cytoplasm. The enzyme catalyses tRNA(Glu) + L-glutamate + ATP = L-glutamyl-tRNA(Glu) + AMP + diphosphate. Functionally, catalyzes the attachment of glutamate to tRNA(Glu) in a two-step reaction: glutamate is first activated by ATP to form Glu-AMP and then transferred to the acceptor end of tRNA(Glu). This chain is Glutamate--tRNA ligase, found in Bacteroides fragilis (strain ATCC 25285 / DSM 2151 / CCUG 4856 / JCM 11019 / LMG 10263 / NCTC 9343 / Onslow / VPI 2553 / EN-2).